A 166-amino-acid chain; its full sequence is Small ribosomal subunit protein uS5 (166 aa).

Positions 11 to 74 constitute an S5 DRBM domain; the sequence is LQEKLIAVNR…EKARRNMINV (64 aa).

The protein belongs to the universal ribosomal protein uS5 family. Part of the 30S ribosomal subunit. Contacts proteins S4 and S8.

In terms of biological role, with S4 and S12 plays an important role in translational accuracy. Functionally, located at the back of the 30S subunit body where it stabilizes the conformation of the head with respect to the body. The sequence is that of Small ribosomal subunit protein uS5 from Actinobacillus succinogenes (strain ATCC 55618 / DSM 22257 / CCUG 43843 / 130Z).